We begin with the raw amino-acid sequence, 313 residues long: Putative olfactory receptor 2B3 (313 aa).

Over 1-25 the chain is Extracellular; the sequence is MNWENESSPKEFILLGFSDRAWLQM. The N-linked (GlcNAc...) asparagine glycan is linked to N5. A helical membrane pass occupies residues 26 to 49; that stretch reads PLFVVLLISYTITIFGNVSIMMVC. Residues 50–57 lie on the Cytoplasmic side of the membrane; it reads ILDPKLHT. Residues 58–79 form a helical membrane-spanning segment; that stretch reads PMYFFLTNLSILDLCYTTTTVP. Topologically, residues 80 to 100 are extracellular; it reads HMLVNIGCNKKTISYAGCVAH. C97 and C189 are oxidised to a cystine. Residues 101-120 traverse the membrane as a helical segment; the sequence is LIIFLALGATECLLLAVMSF. Over 121 to 139 the chain is Cytoplasmic; sequence DRYVAVCRPLHYVVIMNYW. The helical transmembrane segment at 140–158 threads the bilayer; the sequence is FCLRMAAFSWLIGFGNSVL. Residues 159–195 lie on the Extracellular side of the membrane; sequence QSSLTLNMPRCGHQEVDHFFCEVPALLKLSCADTKPI. Residues 196-219 traverse the membrane as a helical segment; it reads EAELFFFSVLILLIPVTLILISYG. Over 220 to 236 the chain is Cytoplasmic; that stretch reads FIAQAVLKIRSAEGRQK. The helical transmembrane segment at 237 to 259 threads the bilayer; it reads AFGTCGSHMIVVSLFYGTAIYMY. Topologically, residues 260–272 are extracellular; sequence LQPPSSTSKDWGK. The helical transmembrane segment at 273–292 threads the bilayer; that stretch reads MVSLFYGIITSMLNSLIYSL. At 293-313 the chain is on the cytoplasmic side; that stretch reads RNKDMKEAFKRLMPRIFFCKK.

This sequence belongs to the G-protein coupled receptor 1 family.

It is found in the cell membrane. Odorant receptor. This is Putative olfactory receptor 2B3 (OR2B3) from Homo sapiens (Human).